Here is a 187-residue protein sequence, read N- to C-terminus: UPF0301 protein BCI_0481 (187 aa).

Belongs to the UPF0301 (AlgH) family.

This Baumannia cicadellinicola subsp. Homalodisca coagulata protein is UPF0301 protein BCI_0481.